A 251-amino-acid polypeptide reads, in one-letter code: uncharacterized protein (251 aa).

The signal sequence occupies residues 1 to 18 (MRILIILSIILCSLFARA).

It belongs to the MlaA family.

This is an uncharacterized protein from Rickettsia felis (strain ATCC VR-1525 / URRWXCal2) (Rickettsia azadi).